We begin with the raw amino-acid sequence, 85 residues long: UPF0291 protein str0508 (85 aa).

The tract at residues 62–85 is disordered; sequence TPEKLRQVQREKGLHGRSLDDPES.

Belongs to the UPF0291 family.

The protein resides in the cytoplasm. The chain is UPF0291 protein str0508 from Streptococcus thermophilus (strain CNRZ 1066).